The primary structure comprises 390 residues: Putative F-box protein At3g52320 (390 aa).

The 51-residue stretch at 21–71 folds into the F-box domain; that stretch reads VVFLPEIPEEMLIDILIRLPAKSLMRFKCVSKLWLSLITSRYFTNRFFKPS.

The protein is Putative F-box protein At3g52320 of Arabidopsis thaliana (Mouse-ear cress).